A 247-amino-acid chain; its full sequence is MSKLFWAMLSFITRLPVPRRWSQGLDFEHYSRGIITFPLIGLLLGAISGLVFMALQAWFGVPLAALFSVLVLALMTGGFHLDGLADTCDGVFSARSRDRMLEIMRDSRLGTHGGLALIFVVLAKILVLSELALRGEPILASLAAACAVSRGTAALLMYRHRYAREEGLGNVFIGKIDGRQTCVTLGLAAIFAAVLLPGMHGVAAMVVTMVAIFILGQLLKRTLGGQTGDTLGAAIELGELVFLLALL.

Helical transmembrane passes span Ile-34 to Ala-54, Phe-59 to Phe-79, Gly-113 to Leu-133, Ile-138 to Tyr-158, and Val-194 to Ile-214.

Belongs to the CobS family. Mg(2+) is required as a cofactor.

The protein resides in the cell inner membrane. It catalyses the reaction alpha-ribazole + adenosylcob(III)inamide-GDP = adenosylcob(III)alamin + GMP + H(+). The catalysed reaction is alpha-ribazole 5'-phosphate + adenosylcob(III)inamide-GDP = adenosylcob(III)alamin 5'-phosphate + GMP + H(+). The protein operates within cofactor biosynthesis; adenosylcobalamin biosynthesis; adenosylcobalamin from cob(II)yrinate a,c-diamide: step 7/7. In terms of biological role, joins adenosylcobinamide-GDP and alpha-ribazole to generate adenosylcobalamin (Ado-cobalamin). Also synthesizes adenosylcobalamin 5'-phosphate from adenosylcobinamide-GDP and alpha-ribazole 5'-phosphate. The sequence is that of Adenosylcobinamide-GDP ribazoletransferase from Escherichia coli O17:K52:H18 (strain UMN026 / ExPEC).